Consider the following 305-residue polypeptide: tRNA pseudouridine synthase B (305 aa).

Residue Asp39 is the Nucleophile of the active site.

It belongs to the pseudouridine synthase TruB family. Type 1 subfamily.

The enzyme catalyses uridine(55) in tRNA = pseudouridine(55) in tRNA. Its function is as follows. Responsible for synthesis of pseudouridine from uracil-55 in the psi GC loop of transfer RNAs. This chain is tRNA pseudouridine synthase B, found in Staphylococcus haemolyticus (strain JCSC1435).